The chain runs to 181 residues: Inorganic pyrophosphatase (181 aa).

Substrate is bound by residues Lys-16, Arg-30, and Tyr-42. The Mg(2+) site is built by Asp-52, Asp-57, and Asp-89. Tyr-126 contacts substrate.

It belongs to the PPase family. As to quaternary structure, homohexamer. Mg(2+) serves as cofactor.

The protein localises to the cytoplasm. It catalyses the reaction diphosphate + H2O = 2 phosphate + H(+). Functionally, catalyzes the hydrolysis of inorganic pyrophosphate (PPi) forming two phosphate ions. This Malacoplasma penetrans (strain HF-2) (Mycoplasma penetrans) protein is Inorganic pyrophosphatase.